Consider the following 561-residue polypeptide: Zinc finger protein 37A (561 aa).

The 72-residue stretch at 8–79 (VSFRDVTVGF…EEKFPSQSHL (72 aa)) folds into the KRAB domain. The C2H2-type 1; degenerate zinc-finger motif lies at 146–168 (FEYNECGKAFPENSLFLVHKRGY). Residues 243–265 (IEYNECGTFFSEKLVLHLQQRTH) form a C2H2-type 2; degenerate zinc finger. 10 C2H2-type zinc fingers span residues 271-293 (YECH…QRTH), 299-321 (YECH…QRIH), 327-349 (YGCH…QRTH), 355-377 (YECH…QKTH), 383-405 (YECY…QRIH), 411-433 (YECN…LRTH), 439-461 (YECI…LRRH), 467-489 (FGCN…QRTH), 495-517 (YGCN…HRTH), and 523-545 (YECN…QRIH).

Belongs to the krueppel C2H2-type zinc-finger protein family.

Its subcellular location is the nucleus. Its function is as follows. May be involved in transcriptional regulation. The protein is Zinc finger protein 37A (ZNF37A) of Homo sapiens (Human).